The following is a 260-amino-acid chain: HTH-type transcriptional repressor NanR (260 aa).

The 69-residue stretch at lysine 27 to proline 95 folds into the HTH gntR-type domain. The H-T-H motif DNA-binding region spans glutamate 55–alanine 74.

Belongs to the NanR family.

Its function is as follows. Transcriptional repressor that controls expression of the genes required for the catabolism of sialic acids. This is HTH-type transcriptional repressor NanR from Edwardsiella tarda (strain FL6-60).